Consider the following 316-residue polypeptide: Methionyl-tRNA formyltransferase (316 aa).

Residue 112-115 (SLLP) participates in (6S)-5,6,7,8-tetrahydrofolate binding.

The protein belongs to the Fmt family.

The enzyme catalyses L-methionyl-tRNA(fMet) + (6R)-10-formyltetrahydrofolate = N-formyl-L-methionyl-tRNA(fMet) + (6S)-5,6,7,8-tetrahydrofolate + H(+). Attaches a formyl group to the free amino group of methionyl-tRNA(fMet). The formyl group appears to play a dual role in the initiator identity of N-formylmethionyl-tRNA by promoting its recognition by IF2 and preventing the misappropriation of this tRNA by the elongation apparatus. The chain is Methionyl-tRNA formyltransferase from Psychromonas ingrahamii (strain DSM 17664 / CCUG 51855 / 37).